The sequence spans 717 residues: Delta-1-pyrroline-5-carboxylate synthase A (717 aa).

Residues 1-296 form a glutamate 5-kinase region; the sequence is MEELDRSRAF…WAPITDSNAR (296 aa). Substrate contacts are provided by Ser60, Asp157, and Asn176. Residues 196–197 and 236–242 each bind ATP; these read SD and RGGMTAK. Positions 297–717 are gamma-glutamyl phosphate reductase; that stretch reads DMAVAARESS…YTHQDIPIQA (421 aa).

This sequence in the N-terminal section; belongs to the glutamate 5-kinase family. In the C-terminal section; belongs to the gamma-glutamyl phosphate reductase family.

The catalysed reaction is L-glutamate + ATP = L-glutamyl 5-phosphate + ADP. It carries out the reaction L-glutamate 5-semialdehyde + phosphate + NADP(+) = L-glutamyl 5-phosphate + NADPH + H(+). It functions in the pathway amino-acid biosynthesis; L-proline biosynthesis; L-glutamate 5-semialdehyde from L-glutamate: step 1/2. It participates in amino-acid biosynthesis; L-proline biosynthesis; L-glutamate 5-semialdehyde from L-glutamate: step 2/2. Its function is as follows. P5CS plays a key role in proline biosynthesis, leading to osmoregulation in plants. The protein is Delta-1-pyrroline-5-carboxylate synthase A (P5CSA) of Arabidopsis thaliana (Mouse-ear cress).